The chain runs to 254 residues: tRNA (guanine-N(1)-)-methyltransferase (254 aa).

S-adenosyl-L-methionine is bound by residues Gly113 and 133-138 (LGDFVL).

The protein belongs to the RNA methyltransferase TrmD family. Homodimer.

It localises to the cytoplasm. The catalysed reaction is guanosine(37) in tRNA + S-adenosyl-L-methionine = N(1)-methylguanosine(37) in tRNA + S-adenosyl-L-homocysteine + H(+). Functionally, specifically methylates guanosine-37 in various tRNAs. In Herpetosiphon aurantiacus (strain ATCC 23779 / DSM 785 / 114-95), this protein is tRNA (guanine-N(1)-)-methyltransferase.